The chain runs to 374 residues: MPHKVSLSRLKLTDFRNYAAVSLALDGRHAVLTGNNGAGKTNLMEAVSLLSPGRGLRRAAYGDITRVGAAGGFSIFAALDGMEGEVEIGTGIEAGEETTTRKLRINGTPAKTADELTDHLRLLWLTPAMDGLFTGASSDRRRFLDRLVLSLDPAHGRRASDFERAMRSRNKLLDEGRFDPSWLAGIEEQMASLGIAMALARQEMLGLLARLIEERPESSPFPSASLQLSGFMDGQFSRPSVDLEDEYAAMLAESRYRDASAGRTLDGPHRADLIVHHREKAMEAERCSTGEQKALLVGLVLAHARLVGNLTGHAPILLLDEIAAHLDEGRRAALFDLIDGLGGQAFMTGTDQTMFSALADRAQFFTVADGKVFG.

34–41 provides a ligand contact to ATP; that stretch reads GNNGAGKT.

It belongs to the RecF family.

Its subcellular location is the cytoplasm. In terms of biological role, the RecF protein is involved in DNA metabolism; it is required for DNA replication and normal SOS inducibility. RecF binds preferentially to single-stranded, linear DNA. It also seems to bind ATP. The protein is DNA replication and repair protein RecF of Rhizobium etli (strain CIAT 652).